The chain runs to 308 residues: MAGKTMNYLSTYLKGLAMGAADVVPGVSGGTIAFITGIYDTLLESIRRINPSLLKVWKAQGLAGVFRHINGLFLITLFGGIFTSIATLAKLISWLLVTHPIPIWSFFFGLILVSVWHMLRQIEQKKLSRLLWLIAGAIFAYGITVLKPLHLEPTYINVLISGAIAICAMILPGISGSFILLLIGMYAPVLGAVKTFQLDILLIFLTGCVIGLLSFSHILSWLLRRYRDVTLTFLTGLMLGTLPKIWPWKETLSWRVNSSGEQVPLLQRNLSPFEFETLTSQPSQWLLALVLMLAAVALVLGLEKYAEK.

8 consecutive transmembrane segments (helical) span residues 15-35 (GLAM…IAFI), 69-89 (INGL…ATLA), 91-111 (LISW…FGLI), 130-150 (LLWL…KPLH), 163-183 (AIAI…LLLI), 200-220 (ILLI…HILS), 228-248 (DVTL…IWPW), and 282-302 (PSQW…VLGL).

It belongs to the PopT family.

The protein resides in the cell inner membrane. Active in alkaline conditions. Its function is as follows. Flippase that catalyzes the transport of undecaprenyl phosphate (UndP) across the cytoplasmic membrane, from the external side to the cytoplasmic side. Is involved in UndP recycling during peptidoglycan synthesis. Required for cell shape maintenance at alkaline pH and peptidoglycan maintenance. Required by the cholera pathogen for growth and cell shape maintenance in the intestine. This Vibrio cholerae serotype O1 (strain ATCC 39315 / El Tor Inaba N16961) protein is Polyprenyl-phosphate transporter.